A 687-amino-acid chain; its full sequence is Macrolide export ATP-binding/permease protein MacB (687 aa).

In terms of domain architecture, ABC transporter spans 6–244 (LKLAAVTRRF…LAEAGVDAAE (239 aa)). An ATP-binding site is contributed by 42–49 (GASGSGKS). Residues 246 to 256 (AEASEAAVGES) are compositionally biased toward low complexity. Positions 246–281 (AEASEAAVGESPTRNRHDTPAPPAAVDTDPHVDTGT) are disordered. Helical transmembrane passes span 312 to 332 (LLTMLGIIIGITSVVSIVAIG), 560 to 580 (LTLLLSLIAVISLVVGGIGVM), 617 to 637 (LVCLLGGTIGIALSFGLGALF), and 650 to 670 (AGAIVTAFVCSTLTGVIFGFM).

It belongs to the ABC transporter superfamily. Macrolide exporter (TC 3.A.1.122) family. Homodimer.

It is found in the cell inner membrane. Functionally, non-canonical ABC transporter that contains transmembrane domains (TMD), which form a pore in the inner membrane, and an ATP-binding domain (NBD), which is responsible for energy generation. Confers resistance against macrolides. The protein is Macrolide export ATP-binding/permease protein MacB of Burkholderia lata (strain ATCC 17760 / DSM 23089 / LMG 22485 / NCIMB 9086 / R18194 / 383).